We begin with the raw amino-acid sequence, 226 residues long: Cobalt transport protein CbiM 1 (226 aa).

A run of 6 helical transmembrane segments spans residues 6–26, 43–63, 75–95, 107–127, 135–155, and 181–201; these read GFLPVEHAIGWSVASAPVVAY, MLLGVAAAFTFVLSALKMPSV, LGAILFGPSAVAPIGAVVLLF, TLGANIFSMAIVGPFAAAAVF, FPFGVGVFLAASLGDLLTYVT, and VFALTQIPLAISEGLLTVVVM.

The protein belongs to the CbiM family. Forms an energy-coupling factor (ECF) transporter complex composed of an ATP-binding protein (A component, CbiO), a transmembrane protein (T component, CbiQ) and 2 possible substrate-capture proteins (S components, CbiM and CbiN) of unknown stoichimetry.

The protein resides in the cell inner membrane. It participates in cofactor biosynthesis; adenosylcobalamin biosynthesis. In terms of biological role, part of the energy-coupling factor (ECF) transporter complex CbiMNOQ involved in cobalt import. The sequence is that of Cobalt transport protein CbiM 1 (cbim1) from Pelobacter propionicus (strain DSM 2379 / NBRC 103807 / OttBd1).